A 309-amino-acid polypeptide reads, in one-letter code: MIKNKILTATLAVGLIAPLANPFIEISKAENKIEDIGQGAEIIKRTQDITSKRLAITQNIQFDFVKDKKYNKDALVVKMQGFISSRTTYSDLKKYPYIKRMIWPFQYNISLKTKDSNVDLINYLPKNKIDSADVSQKLGYNIGGNFQSAPSIGGSGSFNYSKTISYNQKNYVTEVESQNSKGVKWGVKANSFVTPNGQVSAYDQYLFAQDPTGPAARDYFVPDNQLPPLIQSGFNPSFITTLSHERGKGDKSEFEITYGRNMDATYAYVTRHRLAVDRKHDAFKNRNVTVKYEVNWKTHEVKIKSITPK.

Residues 1-29 (MIKNKILTATLAVGLIAPLANPFIEISKA) form the signal peptide.

Belongs to the aerolysin family. Toxicity requires sequential binding and synergistic association of a class S and a class F component which form heterooligomeric complexes. HlgA (class S) associates with HlgB (class F) thus forming an AB toxin in strains producing both gamma-hemolysins and leukocidins. HlgA and LukF-PV can also form a complex.

The protein localises to the secreted. Its function is as follows. Toxin that seems to act by forming pores in the membrane of the cell. Has a hemolytic and a leucotoxic activity. The sequence is that of Gamma-hemolysin component A (hlgA) from Staphylococcus aureus (strain COL).